We begin with the raw amino-acid sequence, 345 residues long: MDSFRPHLAKVAGGLALDRAEARAAFDDLLSGEVTPVQAGAFLTALKVRGESVEEIVGAAEAMRARMTRVAAPENAVDVVGTGGDHSGSVNVSTLAAIVVAACGVPVAKHGNRAATSRSGAADVLAALGVRLGLDPAAQARCLDEAGLCFLFAQAHHPAMRHVAAVRSELPVRTIFNLLGPLSNPAGVGYQLFGVAQAALAEPLTRVLAELGSRRVWTVHGSDGLDEITVTGPTQVVALDEGRLCHFTIDPREFGLALRAPEELRGGDPADNARSLEAVLAGARNAYRDIAVLNAGAALVVAGAAQALADGVAQAQDAVDSGAARATLARLVRASNDHSNGQEGR.

5-phospho-alpha-D-ribose 1-diphosphate is bound by residues Gly-81, 84-85, Ser-89, 91-94, 109-117, and Ala-121; these read GD, NVST, and KHGNRAATS. Position 81 (Gly-81) interacts with anthranilate. Mg(2+) is bound at residue Ser-93. Asn-112 is a binding site for anthranilate. Arg-167 provides a ligand contact to anthranilate. Asp-226 and Glu-227 together coordinate Mg(2+).

It belongs to the anthranilate phosphoribosyltransferase family. In terms of assembly, homodimer. Mg(2+) serves as cofactor.

It carries out the reaction N-(5-phospho-beta-D-ribosyl)anthranilate + diphosphate = 5-phospho-alpha-D-ribose 1-diphosphate + anthranilate. The protein operates within amino-acid biosynthesis; L-tryptophan biosynthesis; L-tryptophan from chorismate: step 2/5. Functionally, catalyzes the transfer of the phosphoribosyl group of 5-phosphorylribose-1-pyrophosphate (PRPP) to anthranilate to yield N-(5'-phosphoribosyl)-anthranilate (PRA). The sequence is that of Anthranilate phosphoribosyltransferase from Methylobacterium radiotolerans (strain ATCC 27329 / DSM 1819 / JCM 2831 / NBRC 15690 / NCIMB 10815 / 0-1).